The chain runs to 561 residues: Serine palmitoyltransferase 2 (561 aa).

A helical transmembrane segment spans residues Pro57 to Val77. Lys366 bears the N6-(pyridoxal phosphate)lysine mark. Residues Leu443–Pro463 form a helical membrane-spanning segment.

It belongs to the class-II pyridoxal-phosphate-dependent aminotransferase family. LCB1 and LCB2 encode essential subunits of the enzyme and form a heterodimer. Component of the SPOTS complex, at least composed of LCB1/2 (LCB1 and/or LCB2), ORM1/2 (ORM1 and/or ORM2), SAC1 and TSC3. Interacts with LCB1 and TSC3. The cofactor is pyridoxal 5'-phosphate.

It localises to the cytoplasm. Its subcellular location is the endoplasmic reticulum. The protein localises to the membrane. The catalysed reaction is L-serine + hexadecanoyl-CoA + H(+) = 3-oxosphinganine + CO2 + CoA. Its pathway is lipid metabolism; sphingolipid metabolism. Functionally, catalytic subunit of serine palmitoyltransferase (SPT), which catalyzes the committed step in the synthesis of sphingolipids, the condensation of serine with palmitoyl CoA to form the long chain base 3-ketosphinganine. The chain is Serine palmitoyltransferase 2 (LCB2) from Saccharomyces cerevisiae (strain ATCC 204508 / S288c) (Baker's yeast).